The following is a 393-amino-acid chain: Arrestin-C (393 aa).

The segment covering 371-386 (FARQEDGGEEKQKALA) has biased composition (basic and acidic residues). The tract at residues 371–393 (FARQEDGGEEKQKALAEEGDEGS) is disordered.

It belongs to the arrestin family. In terms of assembly, homodimer; disulfide-linked in response to retinal illumination. Interacts with CXCR4; the interaction is dependent on the C-terminal phosphorylation of CXCR4 and modulates the calcium ion mobilization activity of CXCR4.

The protein localises to the photoreceptor inner segment. The protein resides in the cell projection. Its subcellular location is the cilium. It is found in the photoreceptor outer segment. May play a role in an as yet undefined retina-specific signal transduction. Could bind to photoactivated-phosphorylated red/green opsins. The protein is Arrestin-C (ARR3) of Ictidomys tridecemlineatus (Thirteen-lined ground squirrel).